We begin with the raw amino-acid sequence, 369 residues long: Anhydro-N-acetylmuramic acid kinase (369 aa).

12–19 (GTSLDGVD) lines the ATP pocket.

The protein belongs to the anhydro-N-acetylmuramic acid kinase family.

It carries out the reaction 1,6-anhydro-N-acetyl-beta-muramate + ATP + H2O = N-acetyl-D-muramate 6-phosphate + ADP + H(+). It participates in amino-sugar metabolism; 1,6-anhydro-N-acetylmuramate degradation. It functions in the pathway cell wall biogenesis; peptidoglycan recycling. Its function is as follows. Catalyzes the specific phosphorylation of 1,6-anhydro-N-acetylmuramic acid (anhMurNAc) with the simultaneous cleavage of the 1,6-anhydro ring, generating MurNAc-6-P. Is required for the utilization of anhMurNAc either imported from the medium or derived from its own cell wall murein, and thus plays a role in cell wall recycling. This Escherichia coli O8 (strain IAI1) protein is Anhydro-N-acetylmuramic acid kinase.